The sequence spans 265 residues: Glutamate racemase (265 aa).

Residues 10–11 (DS) and 42–43 (YG) contribute to the substrate site. Cys-73 acts as the Proton donor/acceptor in catalysis. 74-75 (NT) is a substrate binding site. Cys-184 (proton donor/acceptor) is an active-site residue. 185-186 (TH) lines the substrate pocket.

The protein belongs to the aspartate/glutamate racemases family.

It catalyses the reaction L-glutamate = D-glutamate. It participates in cell wall biogenesis; peptidoglycan biosynthesis. In terms of biological role, provides the (R)-glutamate required for cell wall biosynthesis. The sequence is that of Glutamate racemase from Pediococcus pentosaceus (strain ATCC 25745 / CCUG 21536 / LMG 10740 / 183-1w).